The sequence spans 292 residues: 4-diphosphocytidyl-2-C-methyl-D-erythritol kinase (292 aa).

Lys20 is a catalytic residue. 103 to 113 (PMGGGIGGGSS) provides a ligand contact to ATP. Asp145 is a catalytic residue.

It belongs to the GHMP kinase family. IspE subfamily.

The catalysed reaction is 4-CDP-2-C-methyl-D-erythritol + ATP = 4-CDP-2-C-methyl-D-erythritol 2-phosphate + ADP + H(+). Its pathway is isoprenoid biosynthesis; isopentenyl diphosphate biosynthesis via DXP pathway; isopentenyl diphosphate from 1-deoxy-D-xylulose 5-phosphate: step 3/6. In terms of biological role, catalyzes the phosphorylation of the position 2 hydroxy group of 4-diphosphocytidyl-2C-methyl-D-erythritol. This is 4-diphosphocytidyl-2-C-methyl-D-erythritol kinase from Cupriavidus necator (strain ATCC 17699 / DSM 428 / KCTC 22496 / NCIMB 10442 / H16 / Stanier 337) (Ralstonia eutropha).